The primary structure comprises 866 residues: Putative linoleate 9S-lipoxygenase 3 (866 aa).

The region spanning 33-161 (NDFGATVIDG…KYRYDRVFFA (129 aa)) is the PLAT domain. Positions 164–866 (AYLPSQMPAA…AKGIPNSISI (703 aa)) constitute a Lipoxygenase domain. The segment at 206-250 (YNDLGSPDSGNPRPILGGSPDTPYPRRGRTGRKPTTTDPDSESRL) is disordered. Fe cation is bound by residues His521, His526, His712, Asn716, and Ile866.

It belongs to the lipoxygenase family. Fe cation is required as a cofactor.

The enzyme catalyses (9Z,12Z)-octadecadienoate + O2 = (9S)-hydroperoxy-(10E,12Z)-octadecadienoate. The protein operates within lipid metabolism; oxylipin biosynthesis. In terms of biological role, plant lipoxygenase may be involved in a number of diverse aspects of plant physiology including growth and development, pest resistance, and senescence or responses to wounding. Catalyzes the hydroperoxidation of lipids containing a cis,cis-1,4-pentadiene structure. This chain is Putative linoleate 9S-lipoxygenase 3, found in Oryza sativa subsp. japonica (Rice).